The primary structure comprises 162 residues: NADH-quinone oxidoreductase subunit I (162 aa).

4Fe-4S ferredoxin-type domains lie at 54–83 (RRYENGEERCIACKLCEVVCPALAITINST) and 93–122 (SSYEMDLFKCIFCGYCEESCPVDSIVETNI). [4Fe-4S] cluster-binding residues include Cys63, Cys66, Cys69, Cys73, Cys102, Cys105, Cys108, and Cys112.

This sequence belongs to the complex I 23 kDa subunit family. As to quaternary structure, NDH-1 is composed of 14 different subunits. Subunits NuoA, H, J, K, L, M, N constitute the membrane sector of the complex. Requires [4Fe-4S] cluster as cofactor.

It localises to the cell inner membrane. It carries out the reaction a quinone + NADH + 5 H(+)(in) = a quinol + NAD(+) + 4 H(+)(out). NDH-1 shuttles electrons from NADH, via FMN and iron-sulfur (Fe-S) centers, to quinones in the respiratory chain. The immediate electron acceptor for the enzyme in this species is believed to be ubiquinone. Couples the redox reaction to proton translocation (for every two electrons transferred, four hydrogen ions are translocated across the cytoplasmic membrane), and thus conserves the redox energy in a proton gradient. This chain is NADH-quinone oxidoreductase subunit I, found in Francisella tularensis subsp. tularensis (strain FSC 198).